The sequence spans 363 residues: Probable dual-specificity RNA methyltransferase RlmN (363 aa).

Glutamate 99 acts as the Proton acceptor in catalysis. The region spanning 105–341 (SENRMTACVS…VTVRKSHGAS (237 aa)) is the Radical SAM core domain. A disulfide bridge connects residues cysteine 112 and cysteine 346. [4Fe-4S] cluster-binding residues include cysteine 119, cysteine 123, and cysteine 126. S-adenosyl-L-methionine-binding positions include 171 to 172 (GE), serine 204, 227 to 229 (SLH), and asparagine 303. The active-site S-methylcysteine intermediate is cysteine 346.

It belongs to the radical SAM superfamily. RlmN family. It depends on [4Fe-4S] cluster as a cofactor.

Its subcellular location is the cytoplasm. It carries out the reaction adenosine(2503) in 23S rRNA + 2 reduced [2Fe-2S]-[ferredoxin] + 2 S-adenosyl-L-methionine = 2-methyladenosine(2503) in 23S rRNA + 5'-deoxyadenosine + L-methionine + 2 oxidized [2Fe-2S]-[ferredoxin] + S-adenosyl-L-homocysteine. The enzyme catalyses adenosine(37) in tRNA + 2 reduced [2Fe-2S]-[ferredoxin] + 2 S-adenosyl-L-methionine = 2-methyladenosine(37) in tRNA + 5'-deoxyadenosine + L-methionine + 2 oxidized [2Fe-2S]-[ferredoxin] + S-adenosyl-L-homocysteine. In terms of biological role, specifically methylates position 2 of adenine 2503 in 23S rRNA and position 2 of adenine 37 in tRNAs. The protein is Probable dual-specificity RNA methyltransferase RlmN of Chlorobium phaeobacteroides (strain DSM 266 / SMG 266 / 2430).